Reading from the N-terminus, the 273-residue chain is 4-hydroxy-tetrahydrodipicolinate reductase (273 aa).

Residues 11-16 (GATGKM) and 106-108 (GTT) contribute to the NAD(+) site. Histidine 162 acts as the Proton donor/acceptor in catalysis. Histidine 163 contacts (S)-2,3,4,5-tetrahydrodipicolinate. Lysine 166 acts as the Proton donor in catalysis. 172-173 (GT) serves as a coordination point for (S)-2,3,4,5-tetrahydrodipicolinate.

The protein belongs to the DapB family.

It localises to the cytoplasm. The catalysed reaction is (S)-2,3,4,5-tetrahydrodipicolinate + NAD(+) + H2O = (2S,4S)-4-hydroxy-2,3,4,5-tetrahydrodipicolinate + NADH + H(+). It carries out the reaction (S)-2,3,4,5-tetrahydrodipicolinate + NADP(+) + H2O = (2S,4S)-4-hydroxy-2,3,4,5-tetrahydrodipicolinate + NADPH + H(+). Its pathway is amino-acid biosynthesis; L-lysine biosynthesis via DAP pathway; (S)-tetrahydrodipicolinate from L-aspartate: step 4/4. Functionally, catalyzes the conversion of 4-hydroxy-tetrahydrodipicolinate (HTPA) to tetrahydrodipicolinate. This is 4-hydroxy-tetrahydrodipicolinate reductase from Synechococcus sp. (strain ATCC 27144 / PCC 6301 / SAUG 1402/1) (Anacystis nidulans).